A 363-amino-acid polypeptide reads, in one-letter code: 3-isopropylmalate dehydrogenase (363 aa).

78-91 contributes to the NAD(+) binding site; it reads GKRWDHLPINERPE. Substrate is bound by residues Arg-99, Arg-109, Arg-138, and Asp-227. Residues Asp-227, Asp-251, and Asp-255 each contribute to the Mg(2+) site. 285–297 is an NAD(+) binding site; sequence GSAPDIAGKNTAN.

This sequence belongs to the isocitrate and isopropylmalate dehydrogenases family. LeuB type 1 subfamily. In terms of assembly, homodimer. The cofactor is Mg(2+). Mn(2+) serves as cofactor.

The protein resides in the cytoplasm. It carries out the reaction (2R,3S)-3-isopropylmalate + NAD(+) = 4-methyl-2-oxopentanoate + CO2 + NADH. The protein operates within amino-acid biosynthesis; L-leucine biosynthesis; L-leucine from 3-methyl-2-oxobutanoate: step 3/4. In terms of biological role, catalyzes the oxidation of 3-carboxy-2-hydroxy-4-methylpentanoate (3-isopropylmalate) to 3-carboxy-4-methyl-2-oxopentanoate. The product decarboxylates to 4-methyl-2 oxopentanoate. This chain is 3-isopropylmalate dehydrogenase, found in Buchnera aphidicola subsp. Uroleucon helianthicola.